Consider the following 542-residue polypeptide: Putative cysteine ligase BshC (542 aa).

Residues 458-487 (VAKNAAIIQAQIEFLQQTLERALLSKHEVE) adopt a coiled-coil conformation.

Belongs to the BshC family.

Its function is as follows. Involved in bacillithiol (BSH) biosynthesis. May catalyze the last step of the pathway, the addition of cysteine to glucosamine malate (GlcN-Mal) to generate BSH. This Geobacillus thermodenitrificans (strain NG80-2) protein is Putative cysteine ligase BshC.